A 211-amino-acid chain; its full sequence is Urease accessory protein UreG (211 aa).

Gly-11–Thr-18 contacts GTP.

The protein belongs to the SIMIBI class G3E GTPase family. UreG subfamily. As to quaternary structure, homodimer. UreD, UreF and UreG form a complex that acts as a GTP-hydrolysis-dependent molecular chaperone, activating the urease apoprotein by helping to assemble the nickel containing metallocenter of UreC. The UreE protein probably delivers the nickel.

It localises to the cytoplasm. In terms of biological role, facilitates the functional incorporation of the urease nickel metallocenter. This process requires GTP hydrolysis, probably effectuated by UreG. The protein is Urease accessory protein UreG of Actinobacillus pleuropneumoniae (Haemophilus pleuropneumoniae).